Here is a 261-residue protein sequence, read N- to C-terminus: tRNA 5-carboxymethoxyuridine methyltransferase (261 aa).

Residues Arg26, 52-53 (GG), Asp73, 102-103 (AQ), and His119 contribute to the S-adenosyl-L-methionine site.

Belongs to the class I-like SAM-binding methyltransferase superfamily. CmoM family.

The enzyme catalyses 5-carboxymethoxyuridine(34) in tRNA + S-adenosyl-L-methionine = 5-methoxycarbonylmethoxyuridine(34) in tRNA + S-adenosyl-L-homocysteine. In terms of biological role, catalyzes the methylation of 5-carboxymethoxyuridine (cmo5U) to form 5-methoxycarbonylmethoxyuridine (mcmo5U) at position 34 in tRNAs. Four tRNAs (tRNA(Ala1), tRNA(Ser1), tRNA(Pro3) and tRNA(Thr4)) are fully modified with mcmo5U in stationary-phase E.coli. Also present at low frequency in tRNA(Leu3) and tRNA(Val1). The protein is tRNA 5-carboxymethoxyuridine methyltransferase of Escherichia coli (strain K12).